We begin with the raw amino-acid sequence, 754 residues long: Gelsolin, cytoplasmic (754 aa).

The actin-severing stretch occupies residues 1 to 120 (MVPAFEGAGA…RYLKGGVASG (120 aa)). The stretch at 22–71 (FEVVPYPKEKYGQFYQGDSYIVLYTRDVNGNLSWDLHFWLGSETSQDEAG) is one Gelsolin-like 1 repeat. Positions 68-71 (DEAG) are actin-actin interfilament contact point. A 1,2-diacyl-sn-glycero-3-phospho-(1D-myo-inositol-4,5-bisphosphate)-binding positions include 101–108 (LFLSRFKK) and 133–141 (RLFHVKGRR). One copy of the Gelsolin-like 2 repeat lies at 143–183 (IRIRQVEVGVGSMNKGDCFILDCGSQVYAYMGPSSRKMDRL). The disordered stretch occupies residues 209–238 (TASGSEAGESSPGLGGGSPDDVADEDTGVD). Over residues 210–220 (ASGSEAGESSP) the composition is skewed to low complexity. Gelsolin-like repeat units lie at residues 266–306 (NMIG…KEKV), 414–463 (LKLE…DEKA), 538–580 (FDTR…EEKA), and 643–684 (LRVN…QEKE). The tract at residues 386–751 (LLQKNAGPAF…MKAQVPETNA (366 aa)) is actin-binding, Ca-sensitive. Residues Gly430, Asp431, Glu461, Asp556, Glu578, Asp659, Asp660, and Glu682 each coordinate Ca(2+).

The protein belongs to the villin/gelsolin family. Tail muscle.

Its subcellular location is the cytoplasm. The protein localises to the cytoskeleton. Its function is as follows. Calcium-regulated, actin-modulating protein that binds to the plus (or barbed) ends of actin monomers or filaments, preventing monomer exchange (end-blocking or capping). It can promote the assembly of monomers into filaments (nucleation) as well as sever filaments already formed. The chain is Gelsolin, cytoplasmic from Homarus americanus (American lobster).